Here is a 962-residue protein sequence, read N- to C-terminus: Putative primase C962R (962 aa).

One can recognise an SF3 helicase domain in the interval 607–775; that stretch reads ELDARLWIMF…PDPNNSYEKK (169 aa). 636-643 lines the ATP pocket; sequence GGGCNGKT.

This sequence belongs to the asfivirus helicase C962R family.

This chain is Putative primase C962R, found in African swine fever virus (isolate Pig/Kenya/KEN-50/1950) (ASFV).